Here is a 117-residue protein sequence, read N- to C-terminus: Non-specific lipid-transfer protein (117 aa).

Residues 1-26 (MASSAVIKLACAVLLCIVVAAPYAEA) form the signal peptide. Disulfide bonds link Cys30-Cys76, Cys40-Cys53, Cys54-Cys99, and Cys74-Cys113.

The protein belongs to the plant LTP family.

In terms of biological role, plant non-specific lipid-transfer proteins transfer phospholipids as well as galactolipids across membranes. May play a role in wax or cutin deposition in the cell walls of expanding epidermal cells and certain secretory tissues. The polypeptide is Non-specific lipid-transfer protein (Spinacia oleracea (Spinach)).